Consider the following 201-residue polypeptide: Single-stranded DNA-binding protein, mitochondrial (201 aa).

An SSB domain is found at 71–184; that stretch reads VHRAIICGKV…RDGKIRMIKY (114 aa).

The protein resides in the mitochondrion. In terms of biological role, binds to ss-DNA. The polypeptide is Single-stranded DNA-binding protein, mitochondrial (Arabidopsis thaliana (Mouse-ear cress)).